The following is a 338-amino-acid chain: Phenylalanine--tRNA ligase alpha subunit (338 aa).

Glutamate 252 is a Mg(2+) binding site.

This sequence belongs to the class-II aminoacyl-tRNA synthetase family. Phe-tRNA synthetase alpha subunit type 1 subfamily. In terms of assembly, tetramer of two alpha and two beta subunits. Mg(2+) is required as a cofactor.

It localises to the cytoplasm. It carries out the reaction tRNA(Phe) + L-phenylalanine + ATP = L-phenylalanyl-tRNA(Phe) + AMP + diphosphate + H(+). The polypeptide is Phenylalanine--tRNA ligase alpha subunit (Pseudomonas fluorescens (strain ATCC BAA-477 / NRRL B-23932 / Pf-5)).